We begin with the raw amino-acid sequence, 235 residues long: Adapter protein MecA (235 aa).

Residues Leu113–Ser135 show a composition bias toward basic and acidic residues. The tract at residues Leu113–Gln136 is disordered.

The protein belongs to the MecA family. As to quaternary structure, homodimer.

Its function is as follows. Enables the recognition and targeting of unfolded and aggregated proteins to the ClpC protease or to other proteins involved in proteolysis. In Leuconostoc mesenteroides subsp. mesenteroides (strain ATCC 8293 / DSM 20343 / BCRC 11652 / CCM 1803 / JCM 6124 / NCDO 523 / NBRC 100496 / NCIMB 8023 / NCTC 12954 / NRRL B-1118 / 37Y), this protein is Adapter protein MecA.